A 377-amino-acid chain; its full sequence is Homoserine O-succinyltransferase (377 aa).

An AB hydrolase-1 domain is found at Asn-50–Met-359. The active-site Nucleophile is Ser-156. Position 226 (Arg-226) interacts with substrate. Residues Asp-321 and His-354 contribute to the active site. Asp-355 contributes to the substrate binding site.

It belongs to the AB hydrolase superfamily. MetX family. In terms of assembly, homodimer.

The protein localises to the cytoplasm. It carries out the reaction L-homoserine + succinyl-CoA = O-succinyl-L-homoserine + CoA. It participates in amino-acid biosynthesis; L-methionine biosynthesis via de novo pathway; O-succinyl-L-homoserine from L-homoserine: step 1/1. Functionally, transfers a succinyl group from succinyl-CoA to L-homoserine, forming succinyl-L-homoserine. The chain is Homoserine O-succinyltransferase from Nitrosospira multiformis (strain ATCC 25196 / NCIMB 11849 / C 71).